Here is a 193-residue protein sequence, read N- to C-terminus: Dual-action ribosomal maturation protein DarP (193 aa).

Over residues 1–10 (MRGRDEDTGE) the composition is skewed to basic and acidic residues. Disordered regions lie at residues 1-20 (MRGR…SQQR) and 170-193 (SQKP…ENDE). A compositionally biased stretch (acidic residues) spans 181-193 (GLEDEESASENDE).

Belongs to the DarP family.

The protein resides in the cytoplasm. Member of a network of 50S ribosomal subunit biogenesis factors which assembles along the 30S-50S interface, preventing incorrect 23S rRNA structures from forming. Promotes peptidyl transferase center (PTC) maturation. The sequence is that of Dual-action ribosomal maturation protein DarP from Xanthomonas campestris pv. campestris (strain 8004).